The sequence spans 380 residues: Cytochrome b (380 aa).

The next 4 helical transmembrane spans lie at phenylalanine 34 to methionine 54, tryptophan 78 to isoleucine 99, tryptophan 114 to leucine 134, and phenylalanine 179 to threonine 199. Residues histidine 84 and histidine 98 each contribute to the heme b site. Heme b is bound by residues histidine 183 and histidine 197. Residue histidine 202 participates in a ubiquinone binding. 4 helical membrane-spanning segments follow: residues leucine 227–serine 247, leucine 289–histidine 309, leucine 321–serine 341, and phenylalanine 348–proline 368.

It belongs to the cytochrome b family. As to quaternary structure, the cytochrome bc1 complex contains 11 subunits: 3 respiratory subunits (MT-CYB, CYC1 and UQCRFS1), 2 core proteins (UQCRC1 and UQCRC2) and 6 low-molecular weight proteins (UQCRH/QCR6, UQCRB/QCR7, UQCRQ/QCR8, UQCR10/QCR9, UQCR11/QCR10 and a cleavage product of UQCRFS1). This cytochrome bc1 complex then forms a dimer. The cofactor is heme b.

Its subcellular location is the mitochondrion inner membrane. Component of the ubiquinol-cytochrome c reductase complex (complex III or cytochrome b-c1 complex) that is part of the mitochondrial respiratory chain. The b-c1 complex mediates electron transfer from ubiquinol to cytochrome c. Contributes to the generation of a proton gradient across the mitochondrial membrane that is then used for ATP synthesis. This is Cytochrome b (MT-CYB) from Procellaria parkinsoni (Black petrel).